We begin with the raw amino-acid sequence, 337 residues long: Glyceraldehyde-3-phosphate dehydrogenase (337 aa).

NAD(+) is bound by residues 12-13 (RI), Asp36, Arg80, and Ser122. Residues 153–155 (SCT) and Thr184 contribute to the D-glyceraldehyde 3-phosphate site. Residue Cys154 is the Nucleophile of the active site. Asn185 is a binding site for NAD(+). Residues Arg199, 212–213 (TG), and Arg235 each bind D-glyceraldehyde 3-phosphate. Asn318 provides a ligand contact to NAD(+).

Belongs to the glyceraldehyde-3-phosphate dehydrogenase family. In terms of assembly, homotetramer.

The protein localises to the cytoplasm. It carries out the reaction D-glyceraldehyde 3-phosphate + phosphate + NAD(+) = (2R)-3-phospho-glyceroyl phosphate + NADH + H(+). Its pathway is carbohydrate degradation; glycolysis; pyruvate from D-glyceraldehyde 3-phosphate: step 1/5. Functionally, catalyzes the oxidative phosphorylation of glyceraldehyde 3-phosphate (G3P) to 1,3-bisphosphoglycerate (BPG) using the cofactor NAD. The first reaction step involves the formation of a hemiacetal intermediate between G3P and a cysteine residue, and this hemiacetal intermediate is then oxidized to a thioester, with concomitant reduction of NAD to NADH. The reduced NADH is then exchanged with the second NAD, and the thioester is attacked by a nucleophilic inorganic phosphate to produce BPG. The polypeptide is Glyceraldehyde-3-phosphate dehydrogenase (gap) (Zymomonas mobilis subsp. mobilis (strain ATCC 31821 / ZM4 / CP4)).